Reading from the N-terminus, the 202-residue chain is MAISKNLPLLNNHFRKHWQERVRVHFDQAGKKASRRQSRLRKAAKIAPRPIDALRPVVRAPTVKYNRKVRAGRGFTLAELKAVGIAPKYARTIGISVDHRRQNKSQETFDANVARLQEYKSKLVIFDKKTKASEVASFEQVDVSATFPVEQPAPESGLRAVEVPEQTAYRTLRLARNEKKYKGIREKRAKEKAEAEAEKAKK.

Residues 183–202 (GIREKRAKEKAEAEAEKAKK) form a disordered region.

The protein belongs to the eukaryotic ribosomal protein eL13 family. Component of the large ribosomal subunit. Mature ribosomes consist of a small (40S) and a large (60S) subunit. The 40S subunit contains about 32 different proteins and 1 molecule of RNA (18S). The 60S subunit contains 45 different proteins and 3 molecules of RNA (25S, 5.8S and 5S).

It localises to the cytoplasm. Component of the ribosome, a large ribonucleoprotein complex responsible for the synthesis of proteins in the cell. The small ribosomal subunit (SSU) binds messenger RNAs (mRNAs) and translates the encoded message by selecting cognate aminoacyl-transfer RNA (tRNA) molecules. The large subunit (LSU) contains the ribosomal catalytic site termed the peptidyl transferase center (PTC), which catalyzes the formation of peptide bonds, thereby polymerizing the amino acids delivered by tRNAs into a polypeptide chain. The nascent polypeptides leave the ribosome through a tunnel in the LSU and interact with protein factors that function in enzymatic processing, targeting, and the membrane insertion of nascent chains at the exit of the ribosomal tunnel. In Candida albicans (strain SC5314 / ATCC MYA-2876) (Yeast), this protein is Large ribosomal subunit protein eL13.